A 565-amino-acid polypeptide reads, in one-letter code: Proline--tRNA ligase (565 aa).

Belongs to the class-II aminoacyl-tRNA synthetase family. ProS type 1 subfamily. In terms of assembly, homodimer.

The protein localises to the cytoplasm. The enzyme catalyses tRNA(Pro) + L-proline + ATP = L-prolyl-tRNA(Pro) + AMP + diphosphate. Catalyzes the attachment of proline to tRNA(Pro) in a two-step reaction: proline is first activated by ATP to form Pro-AMP and then transferred to the acceptor end of tRNA(Pro). As ProRS can inadvertently accommodate and process non-cognate amino acids such as alanine and cysteine, to avoid such errors it has two additional distinct editing activities against alanine. One activity is designated as 'pretransfer' editing and involves the tRNA(Pro)-independent hydrolysis of activated Ala-AMP. The other activity is designated 'posttransfer' editing and involves deacylation of mischarged Ala-tRNA(Pro). The misacylated Cys-tRNA(Pro) is not edited by ProRS. The chain is Proline--tRNA ligase from Francisella tularensis subsp. tularensis (strain FSC 198).